A 264-amino-acid chain; its full sequence is Apolipoprotein A-I (264 aa).

An N-terminal signal peptide occupies residues 1–18 (MKAVLLVVAALFLAGSQA). 2 repeat units span residues 67 to 88 (LRLS…ADFG) and 89 to 110 (LATQ…QIVS). Residues 67–264 (LRLSDNWDTL…DQASKQLAAQ (198 aa)) are 10 X approximate tandem repeats. A 3; half-length repeat occupies 111–121 (EDLQDVKHKVQ). Repeat copies occupy residues 122–143 (PYLE…EKVR), 144–165 (PLGI…EKLT), and 166–187 (PLGE…TQLA). Residues 188–207 (PFSEEMRQRLAKRLEELKDS) form a 7; truncated repeat. M193 carries the methionine sulfoxide modification. The stretch at 208-229 (ATLADYHAKASEHLKMLGEKAK) is repeat 8. The stretch at 230-240 (PALEDLRQGLL) is one 9; half-length repeat. Repeat 10 spans residues 241–264 (PVLENLKASILSSIDQASKQLAAQ).

This sequence belongs to the apolipoprotein A1/A4/E family. As to quaternary structure, homodimer. Interacts with APOA1BP and CLU. Component of a sperm activating protein complex (SPAP), consisting of APOA1, an immunoglobulin heavy chain, an immunoglobulin light chain and albumin. Interacts with NDRG1. Interacts with SCGB3A2. Interacts with NAXE and YJEFN3. In terms of processing, glycosylated. Palmitoylated. Post-translationally, phosphorylation sites are present in the extracellular medium.

It localises to the secreted. Functionally, participates in the reverse transport of cholesterol from tissues to the liver for excretion by promoting cholesterol efflux from tissues and by acting as a cofactor for the lecithin cholesterol acyltransferase (LCAT). As part of the SPAP complex, activates spermatozoa motility. The chain is Apolipoprotein A-I (APOA1) from Cavia aperea (Brazilian guinea pig).